The sequence spans 330 residues: Putative aminohydrolase AF_1775 (330 aa).

Residues His-54, His-56, His-181, and Asp-253 each coordinate Zn(2+).

Belongs to the metallo-dependent hydrolases superfamily. ATZ/TRZ family.

The chain is Putative aminohydrolase AF_1775 from Archaeoglobus fulgidus (strain ATCC 49558 / DSM 4304 / JCM 9628 / NBRC 100126 / VC-16).